We begin with the raw amino-acid sequence, 81 residues long: Photosystem I iron-sulfur center (81 aa).

2 consecutive 4Fe-4S ferredoxin-type domains span residues Ser-2–Trp-31 and Ile-39–Tyr-68. [4Fe-4S] cluster contacts are provided by Cys-11, Cys-14, Cys-17, Cys-21, Cys-48, Cys-51, Cys-54, and Cys-58.

The eukaryotic PSI reaction center is composed of at least 11 subunits. [4Fe-4S] cluster is required as a cofactor.

Its subcellular location is the plastid. The protein localises to the chloroplast thylakoid membrane. The enzyme catalyses reduced [plastocyanin] + hnu + oxidized [2Fe-2S]-[ferredoxin] = oxidized [plastocyanin] + reduced [2Fe-2S]-[ferredoxin]. Apoprotein for the two 4Fe-4S centers FA and FB of photosystem I (PSI); essential for photochemical activity. FB is the terminal electron acceptor of PSI, donating electrons to ferredoxin. The C-terminus interacts with PsaA/B/D and helps assemble the protein into the PSI complex. Required for binding of PsaD and PsaE to PSI. PSI is a plastocyanin-ferredoxin oxidoreductase, converting photonic excitation into a charge separation, which transfers an electron from the donor P700 chlorophyll pair to the spectroscopically characterized acceptors A0, A1, FX, FA and FB in turn. This Spinacia oleracea (Spinach) protein is Photosystem I iron-sulfur center.